The primary structure comprises 461 residues: Cysteine--tRNA ligase (461 aa).

Cysteine 28 provides a ligand contact to Zn(2+). The 'HIGH' region motif lies at 30 to 40; sequence VTIYDLCHIGH. Positions 209, 234, and 238 each coordinate Zn(2+). Residues 266 to 270 carry the 'KMSKS' region motif; that stretch reads KMSKS. An ATP-binding site is contributed by lysine 269.

The protein belongs to the class-I aminoacyl-tRNA synthetase family. In terms of assembly, monomer. Zn(2+) serves as cofactor.

The protein localises to the cytoplasm. The catalysed reaction is tRNA(Cys) + L-cysteine + ATP = L-cysteinyl-tRNA(Cys) + AMP + diphosphate. This is Cysteine--tRNA ligase from Edwardsiella ictaluri (strain 93-146).